Reading from the N-terminus, the 391-residue chain is Salivary protein TRIO (391 aa).

The N-terminal stretch at 1-24 (MCRGLSAVLILLVSLSAQLHVVVG) is a signal peptide. Asn-323 carries an N-linked (GlcNAc...) asparagine glycan.

Female salivary gland (at protein level). Female saliva (at protein level). Not detected in female midgut, head and carcass (at protein level). Not detected in male tissues (at protein level).

The protein localises to the secreted. Functionally, required for efficient probing on a mammalian host. Alters the local inflammatory response in the host skin following a mosquito bite by suppressing TNF-alpha/TNF expression. Its function is as follows. (Microbial infection) Contributes to optimal transmission of Plasmodium berghei sporozoites to mice. (Microbial infection) Contributes to optimal transmission of Plasmodium falciparum sporozoites to mammalian host. In Anopheles gambiae (African malaria mosquito), this protein is Salivary protein TRIO.